The following is a 1211-amino-acid chain: PH domain-containing protein DDB_G0287875 (1211 aa).

A Ras-associating 1 domain is found at 5 to 90 (QKKILKVFDQ…YKFFFLNPNG (86 aa)). Residues 103-112 (KSQSASTSGS) are compositionally biased toward polar residues. The tract at residues 103–133 (KSQSASTSGSAPPKKEPPKPQELQQKQHISK) is disordered. The PH domain maps to 132–223 (SKGKSGWLLR…WAQELQATMN (92 aa)). Calponin-homology (CH) domains follow at residues 277-384 (TTLV…VGYF) and 392-502 (FNMR…LSGQ). Disordered stretches follow at residues 520 to 941 (VEPE…TESV) and 973 to 1110 (TSAT…PKNT). Residues 527–572 (SIRDKQLKLMREKKEEEDRLKKEKEEKEKEEKEKLEKESSAAAAAT) are a coiled coil. Basic and acidic residues predominate over residues 528–565 (IRDKQLKLMREKKEEEDRLKKEKEEKEKEEKEKLEKES). Low complexity-rich tracts occupy residues 566–596 (SAAAAATSSIASTANSNSTEPPKPTTVPLKK), 607–646 (PPTVSSPTTTTTTTVPTTVPTTVTTTTTTTSPTTSPTLTP), 655–668 (KKPATAPLKLKPVA), and 676–691 (PSSSTSTTTTPTTTPS). Positions 703-729 (QLEKEKQDRLEKARLEKEKAEKEEQEF) are enriched in basic and acidic residues. Residues 703–847 (QLEKEKQDRL…ERKHDENDMD (145 aa)) are a coiled coil. The segment covering 744-753 (LLEQQKQQQE) has biased composition (low complexity). Basic and acidic residues-rich tracts occupy residues 754-778 (GQERLRKEEEEQQQQRELEEKQRQI) and 786-853 (EARI…KLLE). Over residues 862–877 (PTITPPQSLHSSQIIR) the composition is skewed to polar residues. Positions 880–909 (IEEDDQTNSELEMFQNEYNRLQDEEEHINS) form a coiled coil. Composition is skewed to low complexity over residues 914-936 (GSSGSNNSNNNNNNNNNKSGASS) and 976-1010 (TTSDSFNLSTSSTSLSFLPSSPDLSTNSTFTTNNN). Over residues 1032 to 1048 (TKEQQSIIDKQTGLVSK) the composition is skewed to polar residues. The stretch at 1048–1076 (KQSTNNESNEQQQQQQQQQQLQQQQSSQN) forms a coiled coil. Positions 1049-1083 (QSTNNESNEQQQQQQQQQQLQQQQSSQNSTTSIST) are enriched in low complexity. Over residues 1093 to 1104 (NEEKEKESEPHK) the composition is skewed to basic and acidic residues. One can recognise a Ras-associating 2 domain in the interval 1112–1196 (GRVVVRICLE…DRFVFKKNDI (85 aa)).

This is PH domain-containing protein DDB_G0287875 from Dictyostelium discoideum (Social amoeba).